Reading from the N-terminus, the 516-residue chain is Tyrosine decarboxylase 3 (516 aa).

K319 bears the N6-(pyridoxal phosphate)lysine mark.

Belongs to the group II decarboxylase family. Homodimer. Pyridoxal 5'-phosphate serves as cofactor.

It catalyses the reaction L-tyrosine + H(+) = tyramine + CO2. The polypeptide is Tyrosine decarboxylase 3 (TYRDC-3) (Petroselinum crispum (Parsley)).